We begin with the raw amino-acid sequence, 418 residues long: Trans-acting enoyl reductase (418 aa).

This sequence belongs to the saccharopine dehydrogenase family. Enoyl reductase subfamily.

Its function is as follows. Involved in the reduction of the double bond between C-4 and C-5 during phthiocerol dimycocerosates (DIM A) and glycosylated phenolphthiocerol dimycocerosates (PGL) biosynthesis. The sequence is that of Trans-acting enoyl reductase from Mycobacterium leprae (strain TN).